The chain runs to 434 residues: Epimerase FSL3 (434 aa).

125-126 (GF) contributes to the substrate binding site. The active-site Proton acceptor is E392.

This sequence belongs to the aldose epimerase family. Monomer.

The protein operates within secondary metabolite biosynthesis. In terms of biological role, epimerase; part of the gene cluster that mediates the biosynthesis of fusarielins F, G and H, decaketide compounds with 5 methylations and a decaline core that act as mycoestrogens as they stimulate growth of MCF-7 breast cancer cells. The initial compound in the pathway is produced by the reducing polyketide synthase FSL1. FSL1 lacks an active enoyl reductase (ER) domain and biosynthesis of fusarielins relies on the trans-acting enoyl reductase FSL5, before it is released through hydrolysis catalyzed by the thioesterase FSL2. Fusarielins F, G, and H have a C11=C12 cis double bond and is fully reduced between C10 and C11 and between C12 and C13. FSL3 can be involved in the formation of the C11=C12 cis double bond by moving a hypothetical C10=C11 or C12=C13 trans double bond to form prefusarielin. Prefusarielin is oxygenated at C15 and C16 by the cytochrome P450 monooxygenase FSL4, resulting in fusarielin F, which subsequently is epoxidized into fusarielin G by the same enzyme. The final step in the pathway is a reduction of the carboxylic acid moiety to yield fusarielin H via a still undetermined mechanism. The chain is Epimerase FSL3 from Gibberella zeae (strain ATCC MYA-4620 / CBS 123657 / FGSC 9075 / NRRL 31084 / PH-1) (Wheat head blight fungus).